A 345-amino-acid polypeptide reads, in one-letter code: Small ribosomal subunit biogenesis GTPase RsgA (345 aa).

The segment at 1–36 (MSKNKLSKGQERRVQANHQRRLQQRERGAAHWDDQP) is disordered. Residues 23–34 (QQRERGAAHWDD) show a composition bias toward basic and acidic residues. The region spanning 103 to 273 (RSVLTRPDVY…LIDSPGVREL (171 aa)) is the CP-type G domain. Residues 159-162 (NKID) and 213-221 (GQSGVGKSS) each bind GTP. Zn(2+) is bound by residues cysteine 297, cysteine 302, histidine 304, and cysteine 310.

Belongs to the TRAFAC class YlqF/YawG GTPase family. RsgA subfamily. Monomer. Associates with 30S ribosomal subunit, binds 16S rRNA. Requires Zn(2+) as cofactor.

It localises to the cytoplasm. Its function is as follows. One of several proteins that assist in the late maturation steps of the functional core of the 30S ribosomal subunit. Helps release RbfA from mature subunits. May play a role in the assembly of ribosomal proteins into the subunit. Circularly permuted GTPase that catalyzes slow GTP hydrolysis, GTPase activity is stimulated by the 30S ribosomal subunit. The protein is Small ribosomal subunit biogenesis GTPase RsgA of Sodalis glossinidius (strain morsitans).